The primary structure comprises 951 residues: UvrABC system protein A (951 aa).

33 to 40 (GLSGSGKS) is an ATP binding site. Residues 252–279 (CPICGFTVGELEPRLFSFNAPQGACPDC) form a C4-type zinc finger. ABC transporter domains lie at 309 to 587 (WNPI…RKSL) and 607 to 935 (GNGK…QYLK). 639-646 (GVSGSGKS) is an ATP binding site. The segment at 738-764 (CEACHGDGILKIEMNFLPDVFVPCEVC) adopts a C4-type zinc-finger fold.

Belongs to the ABC transporter superfamily. UvrA family. Forms a heterotetramer with UvrB during the search for lesions.

Its subcellular location is the cytoplasm. Its function is as follows. The UvrABC repair system catalyzes the recognition and processing of DNA lesions. UvrA is an ATPase and a DNA-binding protein. A damage recognition complex composed of 2 UvrA and 2 UvrB subunits scans DNA for abnormalities. When the presence of a lesion has been verified by UvrB, the UvrA molecules dissociate. The sequence is that of UvrABC system protein A from Lactiplantibacillus plantarum (strain ATCC BAA-793 / NCIMB 8826 / WCFS1) (Lactobacillus plantarum).